The sequence spans 251 residues: Derlin-1 (251 aa).

Ser-2 is modified (N-acetylserine). Over 2-15 the chain is Cytoplasmic; that stretch reads SDIGDWFRSIPAIT. The helical transmembrane segment at 16 to 31 threads the bilayer; sequence RYWFAATVAVPLVGKL. Residues 32–69 are Lumenal-facing; that stretch reads GLISPAYLFLWPEAFLYRFQIWRPITATFYFPVGPGTG. A helical membrane pass occupies residues 70–89; that stretch reads FLYLVNLYFLYQYSTRLETG. At 90–94 the chain is on the cytoplasmic side; it reads AFDGR. Residues 95 to 115 form a helical membrane-spanning segment; it reads PADYLFMLLFNWICIVITGLA. At 116–122 the chain is on the lumenal side; sequence MDMQLLM. The helical transmembrane segment at 123-137 threads the bilayer; that stretch reads IPLIMSVLYVWAQLN. Over 138 to 154 the chain is Cytoplasmic; it reads RDMIVSFWFGTRFKACY. Residues 155–166 form a helical membrane-spanning segment; that stretch reads LPWVILGFNYII. The Lumenal segment spans residues 167–170; the sequence is GGSV. Residues 171-189 traverse the membrane as a helical segment; sequence INELIGNLVGHLYFFLMFR. Residues 190–251 lie on the Cytoplasmic side of the membrane; it reads YPMDLGGRNF…WGQGFRLGDQ (62 aa). Ser-201 carries the post-translational modification Phosphoserine. Thr-202 carries the phosphothreonine modification. Residue Ser-226 is modified to Phosphoserine. A disordered region spans residues 229-251; it reads RAADQNGGGGRHNWGQGFRLGDQ. Positions 241 to 248 match the SHP-box motif; it reads NWGQGFRL.

The protein belongs to the derlin family. In terms of assembly, homotetramer. The four subunits of the tetramer are arranged in a twofold symmetry. Forms heterooligomers with DERL2 and DERL3; binding to DERL3 is poorer than that between DERL2 and DERL3. Interacts (via SHP-box motif) with VCP. Interacts with AMFR, SELENOS, SEL1L, SELENOK and SYVN1, as well as with SEL1L-SYVN1 and VCP-SELENOS protein complexes; this interaction is weaker than that observed between DERL2 and these complexes. Interacts with NGLY1 and YOD1. Does not bind to EDEM1. Interacts with DNAJB9. Interacts with RNF103. Interacts with HM13. Interacts with XBP1 isoform 1 (via luminal/ectodomain domain); the interaction obviates the need for ectodomain shedding prior HM13/SPP-mediated XBP1 isoform 1 cleavage. Interacts with the signal recognition particle/SRP and the SRP receptor; in the process of endoplasmic reticulum stress-induced pre-emptive quality control. May interact with UBXN6. Interacts with ZFAND2B; probably through VCP. Interacts with CCDC47. Interacts with C18orf32. May interact with TRAM1. Forms a complex with SVIP and VCP/p97. (Microbial infection) Interacts with the cytomegalovirus US11 protein. In terms of tissue distribution, ubiquitous.

It is found in the endoplasmic reticulum membrane. In terms of biological role, functional component of endoplasmic reticulum-associated degradation (ERAD) for misfolded lumenal proteins. Forms homotetramers which encircle a large channel traversing the endoplasmic reticulum (ER) membrane. This allows the retrotranslocation of misfolded proteins from the ER into the cytosol where they are ubiquitinated and degraded by the proteasome. The channel has a lateral gate within the membrane which provides direct access to membrane proteins with no need to reenter the ER lumen first. May mediate the interaction between VCP and the misfolded protein. Also involved in endoplasmic reticulum stress-induced pre-emptive quality control, a mechanism that selectively attenuates the translocation of newly synthesized proteins into the endoplasmic reticulum and reroutes them to the cytosol for proteasomal degradation. By controlling the steady-state expression of the IGF1R receptor, indirectly regulates the insulin-like growth factor receptor signaling pathway. (Microbial infection) In case of infection by cytomegaloviruses, it plays a central role in the export from the ER and subsequent degradation of MHC class I heavy chains via its interaction with US11 viral protein, which recognizes and associates with MHC class I heavy chains. Also participates in the degradation process of misfolded cytomegalovirus US2 protein. The chain is Derlin-1 from Homo sapiens (Human).